Consider the following 1392-residue polypeptide: DNA-directed RNA polymerase subunit beta'' (1392 aa).

4 residues coordinate Zn(2+): C224, C295, C302, and C305.

The protein belongs to the RNA polymerase beta' chain family. RpoC2 subfamily. In plastids the minimal PEP RNA polymerase catalytic core is composed of four subunits: alpha, beta, beta', and beta''. When a (nuclear-encoded) sigma factor is associated with the core the holoenzyme is formed, which can initiate transcription. The cofactor is Zn(2+).

It localises to the plastid. The protein resides in the chloroplast. The catalysed reaction is RNA(n) + a ribonucleoside 5'-triphosphate = RNA(n+1) + diphosphate. Functionally, DNA-dependent RNA polymerase catalyzes the transcription of DNA into RNA using the four ribonucleoside triphosphates as substrates. The protein is DNA-directed RNA polymerase subunit beta'' of Solanum lycopersicum (Tomato).